A 203-amino-acid chain; its full sequence is Large ribosomal subunit protein bL25 (203 aa).

Belongs to the bacterial ribosomal protein bL25 family. CTC subfamily. Part of the 50S ribosomal subunit; part of the 5S rRNA/L5/L18/L25 subcomplex. Contacts the 5S rRNA. Binds to the 5S rRNA independently of L5 and L18.

Its function is as follows. This is one of the proteins that binds to the 5S RNA in the ribosome where it forms part of the central protuberance. This is Large ribosomal subunit protein bL25 from Dechloromonas aromatica (strain RCB).